A 237-amino-acid chain; its full sequence is Phosphoribosylaminoimidazole-succinocarboxamide synthase (237 aa).

It belongs to the SAICAR synthetase family.

It carries out the reaction 5-amino-1-(5-phospho-D-ribosyl)imidazole-4-carboxylate + L-aspartate + ATP = (2S)-2-[5-amino-1-(5-phospho-beta-D-ribosyl)imidazole-4-carboxamido]succinate + ADP + phosphate + 2 H(+). It functions in the pathway purine metabolism; IMP biosynthesis via de novo pathway; 5-amino-1-(5-phospho-D-ribosyl)imidazole-4-carboxamide from 5-amino-1-(5-phospho-D-ribosyl)imidazole-4-carboxylate: step 1/2. The sequence is that of Phosphoribosylaminoimidazole-succinocarboxamide synthase from Listeria monocytogenes serotype 4a (strain HCC23).